The sequence spans 373 residues: Unsaturated rhamnogalacturonyl hydrolase YteR (373 aa).

Residues 40-41 (HY), Asp88, and 132-136 (HKDGY) contribute to the substrate site. Asp143 functions as the Proton donor in the catalytic mechanism. Residues 213 to 217 (RSIGW) and 333 to 334 (TS) contribute to the substrate site.

The protein belongs to the glycosyl hydrolase 105 family. Monomer.

Its subcellular location is the cytoplasm. The catalysed reaction is 2-O-(4-deoxy-beta-L-threo-hex-4-enopyranuronosyl)-alpha-L-rhamnose + H2O = 5-dehydro-4-deoxy-D-glucuronate + L-rhamnopyranose. Functionally, catalyzes the hydrolysis of unsaturated rhamnogalacturonan disaccharide to yield unsaturated D-galacturonic acid and L-rhamnose. It cannot act on unsaturated glucuronyl hydrolase (UGL) substrates containing unsaturated D-glucuronic acid at the non-reducing terminus, although the active pockets of YesR and UGL are very similar. This is Unsaturated rhamnogalacturonyl hydrolase YteR (yteR) from Bacillus subtilis (strain 168).